Consider the following 388-residue polypeptide: Omega-hydroxy-beta-dihydromenaquinone-9 sulfotransferase Stf3 (388 aa).

This sequence belongs to the Stf3 family.

The catalysed reaction is omega-hydroxy-beta-dihydromenaquinone-9 + 3'-phosphoadenylyl sulfate = omega-sulfo-beta-dihydromenaquinone-9 + adenosine 3',5'-bisphosphate + H(+). Functionally, involved in the biosynthesis of sulfomenaquinone (SMK, initially named S881 on the basis of its mass), which is localized in the outer envelope of M.bovis and negatively regulates its virulence. Catalyzes the transfer of a sulfonate group from 3'-phosphoadenosine-5'-phosphosulfate (PAPS) to omega-hydroxy-beta-dihydromenaquinone-9, generating omega-sulfo-beta-dihydromenaquinone-9 (sulfomenaquinone). This Mycobacterium bovis (strain ATCC BAA-935 / AF2122/97) protein is Omega-hydroxy-beta-dihydromenaquinone-9 sulfotransferase Stf3.